The chain runs to 513 residues: uncharacterized protein (513 aa).

In terms of domain architecture, CYTH spans 11-219 (HLEVERKFDV…SKLARVLGAT (209 aa)). In terms of domain architecture, CHAD spans 228 to 506 (PQPPADPVHR…LEAALRKLDK (279 aa)).

This is an uncharacterized protein from Mycobacterium tuberculosis (strain CDC 1551 / Oshkosh).